A 131-amino-acid chain; its full sequence is MSMHDPIADMLTRIRNGQQAKHQQVTLVSSKLKEEIARVLKEEGYIQDFFIETLPNGLKSITLKLKYYHGRPVIEFIKRISRPGLRVYKSYKDLHSIPGFGVAILSTSKGIMTHVSAKVKGVGGEVICEVA.

This sequence belongs to the universal ribosomal protein uS8 family. Part of the 30S ribosomal subunit. Contacts proteins S5 and S12.

One of the primary rRNA binding proteins, it binds directly to 16S rRNA central domain where it helps coordinate assembly of the platform of the 30S subunit. In Legionella pneumophila subsp. pneumophila (strain Philadelphia 1 / ATCC 33152 / DSM 7513), this protein is Small ribosomal subunit protein uS8.